The chain runs to 305 residues: Sulfate adenylyltransferase subunit 2 (305 aa).

Belongs to the PAPS reductase family. CysD subfamily. As to quaternary structure, heterodimer composed of CysD, the smaller subunit, and CysN.

It catalyses the reaction sulfate + ATP + H(+) = adenosine 5'-phosphosulfate + diphosphate. It functions in the pathway sulfur metabolism; hydrogen sulfide biosynthesis; sulfite from sulfate: step 1/3. In terms of biological role, with CysN forms the ATP sulfurylase (ATPS) that catalyzes the adenylation of sulfate producing adenosine 5'-phosphosulfate (APS) and diphosphate, the first enzymatic step in sulfur assimilation pathway. APS synthesis involves the formation of a high-energy phosphoric-sulfuric acid anhydride bond driven by GTP hydrolysis by CysN coupled to ATP hydrolysis by CysD. In Pseudomonas entomophila (strain L48), this protein is Sulfate adenylyltransferase subunit 2.